Reading from the N-terminus, the 778-residue chain is Glutathione biosynthesis bifunctional protein GshAB (778 aa).

Residues 1–354 form a glutamate--cysteine ligase region; sequence MVNLDKGLLK…EEFFKNHDMV (354 aa). One can recognise an ATP-grasp domain in the interval 521–777; it reads KDILRENNIR…AGEKILDLLF (257 aa). 548–606 is an ATP binding site; sequence RLFKDEKIVIKPKSTNFGLGISIFPGEYSREDYDKAVEIAFREDSSILIEEFMTGKEYR. Residues aspartate 728, glutamate 747, and asparagine 749 each contribute to the Mg(2+) site. Residues aspartate 728, glutamate 747, and asparagine 749 each contribute to the Mn(2+) site.

It in the N-terminal section; belongs to the glutamate--cysteine ligase type 1 family. Type 2 subfamily. As to quaternary structure, monomer. Mg(2+) serves as cofactor. Requires Mn(2+) as cofactor.

It catalyses the reaction L-cysteine + L-glutamate + ATP = gamma-L-glutamyl-L-cysteine + ADP + phosphate + H(+). The catalysed reaction is gamma-L-glutamyl-L-cysteine + glycine + ATP = glutathione + ADP + phosphate + H(+). Its pathway is sulfur metabolism; glutathione biosynthesis; glutathione from L-cysteine and L-glutamate: step 1/2. The protein operates within sulfur metabolism; glutathione biosynthesis; glutathione from L-cysteine and L-glutamate: step 2/2. Its function is as follows. Synthesizes glutathione from L-glutamate and L-cysteine via gamma-L-glutamyl-L-cysteine. The chain is Glutathione biosynthesis bifunctional protein GshAB from Clostridium perfringens (strain 13 / Type A).